The chain runs to 265 residues: MKEDSALIIGGKNFSSRLMVGTGKYTSAEVMVESLLNTESEIVTVAVRRVQNHQNGENLLEKIDWEKFWMLPNTAGCANADEAVRIAILGRELAKLSGQEENNFVKLEVIPDKKYLLPDPIETLKAAEILIKKDFIVLPYINADPILAKKLEEIGCSTVMPLGSPIGSGQGLLNLSNISIIIENSNIPVIIDAGIGVPSEASQAMELGADGVLINSAIALAKDPLKMAKAMNHGVRAGREAFLAGRIEKQRLASASSPFTNISKK.

K106 serves as the catalytic Schiff-base intermediate with DXP. Residues G167, 193 to 194 (AG), and 215 to 216 (NS) each bind 1-deoxy-D-xylulose 5-phosphate.

It belongs to the ThiG family. Homotetramer. Forms heterodimers with either ThiH or ThiS.

Its subcellular location is the cytoplasm. The enzyme catalyses [ThiS sulfur-carrier protein]-C-terminal-Gly-aminoethanethioate + 2-iminoacetate + 1-deoxy-D-xylulose 5-phosphate = [ThiS sulfur-carrier protein]-C-terminal Gly-Gly + 2-[(2R,5Z)-2-carboxy-4-methylthiazol-5(2H)-ylidene]ethyl phosphate + 2 H2O + H(+). It participates in cofactor biosynthesis; thiamine diphosphate biosynthesis. Catalyzes the rearrangement of 1-deoxy-D-xylulose 5-phosphate (DXP) to produce the thiazole phosphate moiety of thiamine. Sulfur is provided by the thiocarboxylate moiety of the carrier protein ThiS. In vitro, sulfur can be provided by H(2)S. The chain is Thiazole synthase from Prochlorococcus marinus (strain MIT 9515).